Consider the following 90-residue polypeptide: Guanine nucleotide-binding protein subunit gamma (90 aa).

The S-palmitoyl cysteine moiety is linked to residue C86. C87 carries the cysteine methyl ester modification. C87 carries S-farnesyl cysteine lipidation. The propeptide at 88–90 is removed in mature form; that stretch reads TIM.

It belongs to the G protein gamma family. As to quaternary structure, g proteins are composed of 3 units, alpha, beta and gamma.

It is found in the membrane. The polypeptide is Guanine nucleotide-binding protein subunit gamma (Kluyveromyces lactis (strain ATCC 8585 / CBS 2359 / DSM 70799 / NBRC 1267 / NRRL Y-1140 / WM37) (Yeast)).